The primary structure comprises 192 residues: Per os infectivity factor 6 (192 aa).

The chain crosses the membrane as a helical span at residues 154 to 174 (IAYVFLFFICIVLLSVLAVFF).

It is found in the host membrane. The protein localises to the virion. Its subcellular location is the host cytoplasm. It localises to the host nucleus. In terms of biological role, per os infectivity factor. This is Per os infectivity factor 6 (AC68) from Autographa californica nuclear polyhedrosis virus (AcMNPV).